Reading from the N-terminus, the 226-residue chain is Biosynthetic peptidoglycan transglycosylase (226 aa).

A helical transmembrane segment spans residues 8–28 (FFGWTWFVMWRFLLLLALLLL).

The protein belongs to the glycosyltransferase 51 family.

Its subcellular location is the cell inner membrane. The enzyme catalyses [GlcNAc-(1-&gt;4)-Mur2Ac(oyl-L-Ala-gamma-D-Glu-L-Lys-D-Ala-D-Ala)](n)-di-trans,octa-cis-undecaprenyl diphosphate + beta-D-GlcNAc-(1-&gt;4)-Mur2Ac(oyl-L-Ala-gamma-D-Glu-L-Lys-D-Ala-D-Ala)-di-trans,octa-cis-undecaprenyl diphosphate = [GlcNAc-(1-&gt;4)-Mur2Ac(oyl-L-Ala-gamma-D-Glu-L-Lys-D-Ala-D-Ala)](n+1)-di-trans,octa-cis-undecaprenyl diphosphate + di-trans,octa-cis-undecaprenyl diphosphate + H(+). It participates in cell wall biogenesis; peptidoglycan biosynthesis. In terms of biological role, peptidoglycan polymerase that catalyzes glycan chain elongation from lipid-linked precursors. The sequence is that of Biosynthetic peptidoglycan transglycosylase from Shewanella frigidimarina (strain NCIMB 400).